A 384-amino-acid polypeptide reads, in one-letter code: MSLQAIKYADNQLQIIDQLQLPFVTEYIPIRSAQDGWHAIKEMRVRGAPAIAIVAILSLAVELSEIQTAGKLSSSSEEVGLFIIEKLHYLVTSRPTAVNLADAARKFETMVTEHTKTQGSTGQSLVAAYLQEAELMLVHDLSDNKNIGAYGAKWILERAATEGQAKVNVLTHCNTGSLATAGYGTALGVIRSLHEGNALNRVYCTETRPYNQGARLTAYELVHEKMPATLITDSMAASLLAKPESKVSAIVVGADRVAANGDTANKIGTYALAVLAKYHGVKFLVAAPRTTIDRGTPSGNEIVIEERAPSEVTTIKGPLQGRVGDALQMETIQLAATGIDVWNPAFDVTPAALIDAVITEKGVVEKGSDGHFHFDALFDESSSS.

D255 functions as the Proton donor in the catalytic mechanism.

It belongs to the eIF-2B alpha/beta/delta subunits family. MtnA subfamily.

The protein resides in the cytoplasm. It localises to the nucleus. It carries out the reaction 5-(methylsulfanyl)-alpha-D-ribose 1-phosphate = 5-(methylsulfanyl)-D-ribulose 1-phosphate. The protein operates within amino-acid biosynthesis; L-methionine biosynthesis via salvage pathway; L-methionine from S-methyl-5-thio-alpha-D-ribose 1-phosphate: step 1/6. Catalyzes the interconversion of methylthioribose-1-phosphate (MTR-1-P) into methylthioribulose-1-phosphate (MTRu-1-P). This is Methylthioribose-1-phosphate isomerase (mri1) from Talaromyces marneffei (strain ATCC 18224 / CBS 334.59 / QM 7333) (Penicillium marneffei).